A 428-amino-acid polypeptide reads, in one-letter code: Adenylosuccinate synthetase (428 aa).

Residues 12–18 (GDEGKGK) and 40–42 (GHT) contribute to the GTP site. The Proton acceptor role is filled by D13. D13 and G40 together coordinate Mg(2+). IMP is bound by residues 13–16 (DEGK), 38–41 (NAGH), T131, R145, Q226, T241, and R305. H41 serves as the catalytic Proton donor. A substrate-binding site is contributed by 301–307 (ATTGRKR). Residues R307, 333-335 (KLD), and 415-417 (SVG) each bind GTP.

It belongs to the adenylosuccinate synthetase family. Homodimer. Mg(2+) is required as a cofactor.

The protein localises to the cytoplasm. It catalyses the reaction IMP + L-aspartate + GTP = N(6)-(1,2-dicarboxyethyl)-AMP + GDP + phosphate + 2 H(+). It participates in purine metabolism; AMP biosynthesis via de novo pathway; AMP from IMP: step 1/2. Its function is as follows. Plays an important role in the de novo pathway of purine nucleotide biosynthesis. Catalyzes the first committed step in the biosynthesis of AMP from IMP. The polypeptide is Adenylosuccinate synthetase (Nitratidesulfovibrio vulgaris (strain DSM 19637 / Miyazaki F) (Desulfovibrio vulgaris)).